Reading from the N-terminus, the 445-residue chain is Exodeoxyribonuclease 7 large subunit (445 aa).

The protein belongs to the XseA family. As to quaternary structure, heterooligomer composed of large and small subunits.

Its subcellular location is the cytoplasm. It carries out the reaction Exonucleolytic cleavage in either 5'- to 3'- or 3'- to 5'-direction to yield nucleoside 5'-phosphates.. Bidirectionally degrades single-stranded DNA into large acid-insoluble oligonucleotides, which are then degraded further into small acid-soluble oligonucleotides. The sequence is that of Exodeoxyribonuclease 7 large subunit from Pasteurella multocida (strain Pm70).